We begin with the raw amino-acid sequence, 62 residues long: Large ribosomal subunit protein uL30 (62 aa).

Belongs to the universal ribosomal protein uL30 family. In terms of assembly, part of the 50S ribosomal subunit.

The protein is Large ribosomal subunit protein uL30 of Paracoccus denitrificans (strain Pd 1222).